Here is a 668-residue protein sequence, read N- to C-terminus: SH2 domain-containing protein B (668 aa).

The segment at 373–411 is disordered; sequence SVSGSEESYQQCNSHPQTSRQFENGNGMRLHEEDNSSID. Polar residues predominate over residues 374-396; it reads VSGSEESYQQCNSHPQTSRQFEN. The region spanning 574 to 642 is the SH2 domain; that stretch reads WIEGFITKEE…DNICESSERY (69 aa).

In terms of processing, phosphorylated on tyrosine residues. Expressed in roots, leaves, stems and flowers.

This is SH2 domain-containing protein B from Arabidopsis thaliana (Mouse-ear cress).